A 1213-amino-acid polypeptide reads, in one-letter code: Protein jagged-1b (1213 aa).

Positions 1–26 are cleaved as a signal peptide; sequence MILRRSSVFSAFYLHAFLLCLRTTVS. Residues 27–1064 lie on the Extracellular side of the membrane; that stretch reads DASGHFELEI…HQIPSPKTDY (1038 aa). A glycan (N-linked (GlcNAc...) asparagine) is linked at Asn139. Residues 182-226 form the DSL domain; that stretch reads VTCLEHYYGFGCNKFCRPRDEFFGHYTCDQNGNKTCLEGWTGPDC. Intrachain disulfides connect Cys184–Cys193 and Cys197–Cys209. Asn214 carries N-linked (GlcNAc...) asparagine glycosylation. Disulfide bonds link Cys217–Cys226, Cys231–Cys242, Cys235–Cys248, Cys250–Cys259, Cys262–Cys273, Cys268–Cys279, Cys281–Cys290, Cys297–Cys309, Cys303–Cys319, Cys321–Cys330, Cys337–Cys348, Cys342–Cys357, Cys359–Cys368, Cys375–Cys386, Cys380–Cys395, Cys397–Cys406, Cys413–Cys424, Cys418–Cys433, Cys435–Cys444, Cys451–Cys461, Cys455–Cys470, Cys472–Cys481, Cys488–Cys499, Cys493–Cys508, Cys510–Cys519, Cys526–Cys537, Cys531–Cys546, Cys548–Cys557, Cys596–Cys612, Cys614–Cys623, Cys630–Cys641, Cys635–Cys650, Cys652–Cys661, Cys668–Cys679, Cys673–Cys688, Cys690–Cys699, Cys706–Cys717, Cys711–Cys726, and Cys728–Cys737. Residues 227–260 enclose the EGF-like 1 domain; the sequence is NTAICRQGCSTEHGSCKQPGGCKCLYGWQGPYCD. Residues 261 to 291 form the EGF-like 2; atypical domain; the sequence is KCIPHPGCVHGTCVEPWQCLCDTNWGGQLCD. 2 consecutive EGF-like domains span residues 293-331 and 333-369; these read DLNYCGTHQPCLNGGTCSNTGPDKYQCSCEDGYSGVNCE and AEHACLSNPCANGGTCKETSQGYECHCAIGWSGTSCE. The EGF-like 5; calcium-binding domain maps to 371-407; it reads NVDDCTPNQCKHGGTCQDLVNGFKCACPPHWTGKTCQ. The region spanning 409–445 is the EGF-like 6; calcium-binding domain; that stretch reads DANECEDKPCVNAKSCHNLIGAYFCECLPGWSGQNCD. The 36-residue stretch at 447–482 folds into the EGF-like 7; calcium-binding domain; sequence NINDCKGQCLNGGTCKDLVNGYRCLCPPGYTGEQCE. Residues 484-520 enclose the EGF-like 8; calcium-binding domain; it reads DVDECASSPCLNGGRCQDEVNGFQCLCPAGFSGQLCQ. EGF-like domains follow at residues 522–558 and 592–624; these read DIDYCKPNPCQNGAQCFNLASDYFCKCPDDYEGKNCS and SSNVCGPHGRCRSQAGGQFTCECQEGFRGTYCH. A glycan (N-linked (GlcNAc...) asparagine) is linked at Asn556. Residues 626–662 form the EGF-like 11; calcium-binding domain; that stretch reads NINDCESNPCRNGGTCIDKVNVYQCICADGWEGVHCE. One can recognise an EGF-like 12; calcium-binding domain in the interval 664 to 700; it reads NIDDCSLNPCLNKGACQDLVNDFYCECRNGWKGKTCH. The EGF-like 13 domain maps to 702–738; sequence RDSQCDEATCNNGGTCHDEGDTFKCRCSPGWEGATCN. An N-linked (GlcNAc...) asparagine glycan is attached at Asn742. Disulfide bonds link Cys745-Cys756, Cys750-Cys765, Cys767-Cys776, Cys783-Cys794, Cys788-Cys803, Cys805-Cys814, Cys821-Cys832, Cys826-Cys841, and Cys843-Cys852. The EGF-like 14 domain maps to 746-777; it reads LPNPCENGGTCVVNGDSFNCVCKEGWEGSTCT. Positions 779 to 815 constitute an EGF-like 15; calcium-binding domain; the sequence is NTNDCNPHPCYNSGTCVDGENWYRCECAPGFAGPDCR. One can recognise an EGF-like 16; calcium-binding domain in the interval 817-853; the sequence is NINECQSSPCAFGSTCVDEINGYRCLCPPGRIGPDCQ. A VWFC domain is found at 860–914; that stretch reads CIANGQVTADGAKWEEDCNICQCQNGRIHCTMMWCGPKSCRIGKARGGCPASQSC. The EGF-like 17 domain maps to 918–956; the sequence is KEEQCFVKPCPSLGECWPSAPPPPSKCHASFSYQDDSCA. N-linked (GlcNAc...) asparagine glycosylation is found at Asn957, Asn988, and Asn1042. A helical membrane pass occupies residues 1065-1087; it reads LVPLLSSIFIVLWIFALASAFLW. Topologically, residues 1088–1213 are cytoplasmic; it reads CIHRRRKQNT…QSLNRMEYIV (126 aa). Residues 1181–1202 are disordered; it reads EERAPNKNPNWTNKQDNRDLET.

It localises to the membrane. The protein localises to the cell membrane. Functionally, ligand for Notch receptors and involved in the mediation of Notch signaling. Seems to be involved in cell-fate decisions. In Danio rerio (Zebrafish), this protein is Protein jagged-1b (jag1b).